Consider the following 129-residue polypeptide: Large ribosomal subunit protein uL22 (129 aa).

The protein belongs to the universal ribosomal protein uL22 family. Part of the 50S ribosomal subunit.

In terms of biological role, this protein binds specifically to 23S rRNA; its binding is stimulated by other ribosomal proteins, e.g. L4, L17, and L20. It is important during the early stages of 50S assembly. It makes multiple contacts with different domains of the 23S rRNA in the assembled 50S subunit and ribosome. Functionally, the globular domain of the protein is located near the polypeptide exit tunnel on the outside of the subunit, while an extended beta-hairpin is found that lines the wall of the exit tunnel in the center of the 70S ribosome. In Prochlorococcus marinus (strain MIT 9211), this protein is Large ribosomal subunit protein uL22.